The chain runs to 115 residues: UPF0738 protein SAV1005 (115 aa).

It belongs to the UPF0738 family.

The chain is UPF0738 protein SAV1005 from Staphylococcus aureus (strain Mu50 / ATCC 700699).